Reading from the N-terminus, the 145-residue chain is Antimicrobial peptide NK-lysin (145 aa).

Residues 1-22 (MTSRALLLLASALLGTPGLTFS) form the signal peptide. A propeptide spanning residues 23–62 (GLNPESYDLATAHLSDGEQFCQGLTQEDLQGDLLTERERQ) is cleaved from the precursor. Residues 62–142 (QGIACWSCRK…VDIKLCKHKA (81 aa)) enclose the Saposin B-type domain. Intrachain disulfides connect Cys66/Cys138, Cys69/Cys132, and Cys97/Cys107. The propeptide occupies 141–145 (KAGLI).

Its subcellular location is the secreted. In terms of biological role, may be an effector molecule of cytotoxic activity. Has antimicrobial activity. This Equus caballus (Horse) protein is Antimicrobial peptide NK-lysin (NKL).